Consider the following 396-residue polypeptide: Elongation factor Tu (396 aa).

Residues 10–206 (KPHCNIGTIG…QVDAYIPQPE (197 aa)) enclose the tr-type G domain. A G1 region spans residues 19–26 (GHVDHGKT). 19–26 (GHVDHGKT) is a GTP binding site. Thr-26 provides a ligand contact to Mg(2+). Positions 60–64 (GITIS) are G2. Residues 81–84 (DCPG) form a G3 region. Residues 81–85 (DCPGH) and 136–139 (NKCD) each bind GTP. The segment at 136 to 139 (NKCD) is G4. Residues 174-176 (SAL) form a G5 region.

This sequence belongs to the TRAFAC class translation factor GTPase superfamily. Classic translation factor GTPase family. EF-Tu/EF-1A subfamily. In terms of assembly, monomer.

The protein localises to the cytoplasm. It carries out the reaction GTP + H2O = GDP + phosphate + H(+). In terms of biological role, GTP hydrolase that promotes the GTP-dependent binding of aminoacyl-tRNA to the A-site of ribosomes during protein biosynthesis. This is Elongation factor Tu from Rhodopseudomonas palustris (strain ATCC BAA-98 / CGA009).